We begin with the raw amino-acid sequence, 369 residues long: Mannose-1-phosphate guanylyltransferase catalytic subunit beta (369 aa).

Residues 12-231 (RALILVGGYG…TGFWMDIGQP (220 aa)) form a substrate-binding domain region. Aspartate 120 contributes to the GDP-alpha-D-mannose binding site. Residue aspartate 120 participates in Mg(2+) binding. Lysine 171 is a catalytic residue. Residue aspartate 227 coordinates GDP-alpha-D-mannose. Aspartate 227 contributes to the Mg(2+) binding site. Residues 254-369 (YTGPGVVGNV…ASVPEPQIIM (116 aa)) form a hexapeptide repeat domain region.

The protein belongs to the transferase hexapeptide repeat family. Component of the GMPPA-GMPPB mannose-1-phosphate guanylyltransferase complex composed of 4 Gmppa subunits and 8 Gmppb subunits; the complex is organized into three layers, a central layer made up of 2 Gmppa dimers sandwiched between two layers each made up of 2 Gmppb dimers. Gmppb catalytic activity is reduced when part of the complex and binding of GDP-alpha-D-Mannose by Gmppa induces allosteric feedback inhibition of Gmppb. Mg(2+) is required as a cofactor.

The catalysed reaction is alpha-D-mannose 1-phosphate + GTP + H(+) = GDP-alpha-D-mannose + diphosphate. The protein operates within nucleotide-sugar biosynthesis; GDP-alpha-D-mannose biosynthesis; GDP-alpha-D-mannose from alpha-D-mannose 1-phosphate (GTP route): step 1/1. With respect to regulation, enzyme activity is reduced by incorporation into the GMPPA-GMPPB mannose-1-phosphate guanylyltransferase complex. Allosterically inhibited, when part of the GMPPA-GMPPB complex, by GDP-alpha-D-mannose binding to Gmppa. Functionally, catalytic subunit of the GMPPA-GMPPB mannose-1-phosphate guanylyltransferase complex. Catalyzes the formation of GDP-mannose, an essential precursor of glycan moieties of glycoproteins and glycolipids. Can catalyze the reverse reaction in vitro. Together with GMPPA regulates GDP-alpha-D-mannose levels. This Drosophila melanogaster (Fruit fly) protein is Mannose-1-phosphate guanylyltransferase catalytic subunit beta.